The sequence spans 170 residues: Putative invertase inhibitor (170 aa).

An N-terminal signal peptide occupies residues 1–14 (MKLSFSLCIFFLIS). Disulfide bonds link Cys22–Cys37 and Cys93–Cys133.

The protein belongs to the PMEI family. Expressed in pollen (at protein level). Expressed in pollen.

This chain is Putative invertase inhibitor, found in Platanus orientalis (Oriental plane-tree).